A 180-amino-acid polypeptide reads, in one-letter code: Large ribosomal subunit protein uL5 (180 aa).

Belongs to the universal ribosomal protein uL5 family. As to quaternary structure, part of the 50S ribosomal subunit; part of the 5S rRNA/L5/L18/L25 subcomplex. Contacts the 5S rRNA and the P site tRNA. Forms a bridge to the 30S subunit in the 70S ribosome.

Functionally, this is one of the proteins that bind and probably mediate the attachment of the 5S RNA into the large ribosomal subunit, where it forms part of the central protuberance. In the 70S ribosome it contacts protein S13 of the 30S subunit (bridge B1b), connecting the 2 subunits; this bridge is implicated in subunit movement. Contacts the P site tRNA; the 5S rRNA and some of its associated proteins might help stabilize positioning of ribosome-bound tRNAs. This chain is Large ribosomal subunit protein uL5, found in Clostridium botulinum (strain ATCC 19397 / Type A).